The following is a 1682-amino-acid chain: Cilia- and flagella-associated protein 43 (1682 aa).

WD repeat units lie at residues 168–207 (NPGM…QEHH), 262–305 (PKDD…VTVL), 315–354 (DGAP…YQVK), 358–397 (EFDG…PLDK), 488–527 (LSQS…SFQI), and 697–738 (SHQG…ANIA). A disordered region spans residues 767-790 (RESTNEQQEETTESQKHLNSDSSE). Coiled-coil stretches lie at residues 926 to 960 (KERT…VEVQ) and 1171 to 1223 (SEDE…HLKR).

Belongs to the CFAP43 family. Expressed in testis. Expressed in the lung, brain, oviduct and nasal cavity.

Its subcellular location is the cell projection. It is found in the cilium. It localises to the flagellum. The protein localises to the cytoplasm. The protein resides in the cytoskeleton. Its subcellular location is the flagellum axoneme. It is found in the cilium axoneme. Its function is as follows. Flagellar protein involved in sperm flagellum axoneme organization and function. Involved in the regulation of the beating frequency of motile cilia on the epithelial cells of the respiratory tract. This chain is Cilia- and flagella-associated protein 43, found in Mus musculus (Mouse).